Here is a 62-residue protein sequence, read N- to C-terminus: Large ribosomal subunit protein bL35 (62 aa).

The interval 31-62 is disordered; it reads HLAQNKTTKQKRQSRKSAQMHSSDLKRFKALI. A compositionally biased stretch (basic and acidic residues) spans 53–62; the sequence is SDLKRFKALI.

This sequence belongs to the bacterial ribosomal protein bL35 family.

This Mycoplasmopsis agalactiae (strain NCTC 10123 / CIP 59.7 / PG2) (Mycoplasma agalactiae) protein is Large ribosomal subunit protein bL35.